We begin with the raw amino-acid sequence, 375 residues long: Platelet-derived growth factor receptor-like protein (375 aa).

A signal peptide spans 1 to 17 (MKVWLLLGLLLLHEALG). Positions 19–63 (VAGQHPPKNKRPKEQGENRIKPTNKKAKPKIPKIKDRDTADSAPK) are disordered. Residues 40-50 (PTNKKAKPKIP) show a composition bias toward basic residues. Residues 62-159 (PKSQSIMMQA…GYICRRDEAR (98 aa)) form the Ig-like C2-type 1 domain. An intrachain disulfide couples cysteine 96 to cysteine 143. N-linked (GlcNAc...) asparagine glycosylation is present at asparagine 219. In terms of domain architecture, Ig-like C2-type 2 spans 272-375 (PSTTILASSN…TTVATTVEFS (104 aa)). The cysteines at positions 293 and 357 are disulfide-linked.

In terms of assembly, forms a complex composed of PDGFRL, TNK2 and GRB2.

The protein localises to the secreted. This Rattus norvegicus (Rat) protein is Platelet-derived growth factor receptor-like protein (Pdgfrl).